An 822-amino-acid polypeptide reads, in one-letter code: Glycerol-3-phosphate acyltransferase (822 aa).

The short motif at 304–309 (CHRSHM) is the HXXXXD motif element.

This sequence belongs to the GPAT/DAPAT family.

It is found in the cell inner membrane. It catalyses the reaction sn-glycerol 3-phosphate + an acyl-CoA = a 1-acyl-sn-glycero-3-phosphate + CoA. The protein operates within phospholipid metabolism; CDP-diacylglycerol biosynthesis; CDP-diacylglycerol from sn-glycerol 3-phosphate: step 1/3. The chain is Glycerol-3-phosphate acyltransferase from Yersinia enterocolitica serotype O:8 / biotype 1B (strain NCTC 13174 / 8081).